A 143-amino-acid chain; its full sequence is Actin-depolymerizing factor 5 (143 aa).

One can recognise an ADF-H domain in the interval 11-143; that stretch reads GMNVKEECQR…GYDVIRGRAQ (133 aa).

It belongs to the actin-binding proteins ADF family.

Actin-depolymerizing protein. Severs actin filaments (F-actin) and binds to actin monomers. The polypeptide is Actin-depolymerizing factor 5 (ADF5) (Oryza sativa subsp. japonica (Rice)).